Consider the following 293-residue polypeptide: Transcription elongation factor S-II (293 aa).

The region spanning 4 to 81 (ADIRSAKAAL…KKWKADVSKG (78 aa)) is the TFIIS N-terminal domain. Residues 81 to 123 (GRPLKTTTTTSSTPSKHADVGSQAQKQVQKQSSSGQRTFKSDN) form a disordered region. A compositionally biased stretch (low complexity) spans 100–116 (VGSQAQKQVQKQSSSGQ). Residues 133 to 248 (IRNNCIGLMY…HAQGAKPQKA (116 aa)) form the TFIIS central domain. Residues 251 to 291 (DLFTCGKCKQKKVSYYQMQTRSADEPMTTFCECTVCGNRWK) form a TFIIS-type zinc finger. Zn(2+) contacts are provided by Cys255, Cys258, Cys283, and Cys286.

The protein belongs to the TFS-II family.

The protein localises to the nucleus. Necessary for efficient RNA polymerase II transcription elongation past template-encoded arresting sites. The arresting sites in DNA have the property of trapping a certain fraction of elongating RNA polymerases that pass through, resulting in locked ternary complexes. Cleavage of the nascent transcript by S-II allows the resumption of elongation from the new 3'-terminus. In Schizosaccharomyces pombe (strain 972 / ATCC 24843) (Fission yeast), this protein is Transcription elongation factor S-II (tfs1).